Here is a 479-residue protein sequence, read N- to C-terminus: Glycogen synthase (479 aa).

Lysine 15 provides a ligand contact to ADP-alpha-D-glucose.

The protein belongs to the glycosyltransferase 1 family. Bacterial/plant glycogen synthase subfamily.

The enzyme catalyses [(1-&gt;4)-alpha-D-glucosyl](n) + ADP-alpha-D-glucose = [(1-&gt;4)-alpha-D-glucosyl](n+1) + ADP + H(+). Its pathway is glycan biosynthesis; glycogen biosynthesis. Its function is as follows. Synthesizes alpha-1,4-glucan chains using ADP-glucose. This Nostoc punctiforme (strain ATCC 29133 / PCC 73102) protein is Glycogen synthase.